The sequence spans 157 residues: Small ribosomal subunit protein uS17 (157 aa).

This sequence belongs to the universal ribosomal protein uS17 family.

In Dunaliella tertiolecta (Green alga), this protein is Small ribosomal subunit protein uS17 (RPS11).